The chain runs to 273 residues: Putative phosphoenolpyruvate synthase regulatory protein (273 aa).

An ADP-binding site is contributed by Gly-153–Thr-160.

This sequence belongs to the pyruvate, phosphate/water dikinase regulatory protein family. PSRP subfamily.

It catalyses the reaction [pyruvate, water dikinase] + ADP = [pyruvate, water dikinase]-phosphate + AMP + H(+). It carries out the reaction [pyruvate, water dikinase]-phosphate + phosphate + H(+) = [pyruvate, water dikinase] + diphosphate. Functionally, bifunctional serine/threonine kinase and phosphorylase involved in the regulation of the phosphoenolpyruvate synthase (PEPS) by catalyzing its phosphorylation/dephosphorylation. This is Putative phosphoenolpyruvate synthase regulatory protein from Sodalis glossinidius (strain morsitans).